A 152-amino-acid chain; its full sequence is MSTQEATPRDDAIRLLARRDYSRSELMSRLAARGHAPDDIASLLDALADEGLQSDARFAEQFVRSRLSRGQGAMKIRAELGARGVTDEVAREALEGEAPDWHRLACEALAKRFDSPGRDPRERAKRERFLASRGFDFEQVRHAMAHAWENTR.

This sequence belongs to the RecX family.

It is found in the cytoplasm. Modulates RecA activity. The polypeptide is Regulatory protein RecX (Chromohalobacter salexigens (strain ATCC BAA-138 / DSM 3043 / CIP 106854 / NCIMB 13768 / 1H11)).